A 1154-amino-acid chain; its full sequence is DNA-directed RNA polymerase, mitochondrial (1154 aa).

A mitochondrion-targeting transit peptide spans 1 to 30 (MLRRKIQTYLSRSHIRRGLCGLRFFQTQRL). The segment at 221 to 243 (ESENGKDQNGDSSLKEKQPDVET) is disordered. Residues 223 to 240 (ENGKDQNGDSSLKEKQPD) show a composition bias toward basic and acidic residues. Catalysis depends on residues aspartate 821, lysine 890, and aspartate 1061.

This sequence belongs to the phage and mitochondrial RNA polymerase family.

Its subcellular location is the mitochondrion. It carries out the reaction RNA(n) + a ribonucleoside 5'-triphosphate = RNA(n+1) + diphosphate. In terms of biological role, DNA-dependent RNA polymerase catalyzes the transcription of DNA into RNA using the four ribonucleoside triphosphates as substrates. Combines in the mitochondrion with mitochondrial transcription factor mtf1 as a holoenzyme to recognize and initiate transcription at the core mitochondrial promoters. In Schizosaccharomyces pombe (strain 972 / ATCC 24843) (Fission yeast), this protein is DNA-directed RNA polymerase, mitochondrial (rpo41).